The following is a 1013-amino-acid chain: Probable beta-galactosidase B (1013 aa).

The signal sequence occupies residues 1-21 (MTRILNCLLVLLACLGVSSKA). Substrate is bound at residue Tyr-90. N-linked (GlcNAc...) asparagine glycosylation is present at Asn-100. Substrate contacts are provided by Asn-135, Ala-136, Glu-137, and Asn-195. The active-site Proton donor is Glu-196. N-linked (GlcNAc...) asparagine glycosylation occurs at Asn-211. Position 265 (Tyr-265) interacts with substrate. Cys-271 and Cys-324 are oxidised to a cystine. The Nucleophile role is filled by Glu-308. Tyr-373 provides a ligand contact to substrate. Asn-411, Asn-442, Asn-456, Asn-626, Asn-735, Asn-768, and Asn-775 each carry an N-linked (GlcNAc...) asparagine glycan.

The protein belongs to the glycosyl hydrolase 35 family.

The protein localises to the secreted. The enzyme catalyses Hydrolysis of terminal non-reducing beta-D-galactose residues in beta-D-galactosides.. In terms of biological role, cleaves beta-linked terminal galactosyl residues from gangliosides, glycoproteins, and glycosaminoglycans. This Penicillium rubens (strain ATCC 28089 / DSM 1075 / NRRL 1951 / Wisconsin 54-1255) (Penicillium chrysogenum) protein is Probable beta-galactosidase B (lacB).